A 343-amino-acid chain; its full sequence is N-acetyl-gamma-glutamyl-phosphate reductase (343 aa).

Cys148 is a catalytic residue.

This sequence belongs to the NAGSA dehydrogenase family. Type 1 subfamily.

The protein localises to the cytoplasm. It carries out the reaction N-acetyl-L-glutamate 5-semialdehyde + phosphate + NADP(+) = N-acetyl-L-glutamyl 5-phosphate + NADPH + H(+). It functions in the pathway amino-acid biosynthesis; L-arginine biosynthesis; N(2)-acetyl-L-ornithine from L-glutamate: step 3/4. In terms of biological role, catalyzes the NADPH-dependent reduction of N-acetyl-5-glutamyl phosphate to yield N-acetyl-L-glutamate 5-semialdehyde. The chain is N-acetyl-gamma-glutamyl-phosphate reductase from Caldicellulosiruptor bescii (strain ATCC BAA-1888 / DSM 6725 / KCTC 15123 / Z-1320) (Anaerocellum thermophilum).